The chain runs to 319 residues: Forkhead box protein E3 (319 aa).

Residues 1 to 69 (MAGRSDMDPP…GRRRRRPLQR (69 aa)) form a disordered region. Positions 44 to 53 (AAAGRGEAAP) are enriched in low complexity. Residues 71–165 (KPPYSYIALI…DNGSFLRRRK (95 aa)) constitute a DNA-binding region (fork-head).

The protein localises to the nucleus. In terms of biological role, transcription factor that controls lens epithelial cell growth through regulation of proliferation, apoptosis and cell cycle. During lens development, controls the ratio of the lens fiber cells to the cells of the anterior lens epithelium by regulating the rate of proliferation and differentiation. Controls lens vesicle closure and subsequent separation of the lens vesicle from ectoderm. Controls the expression of DNAJB1 in a pathway that is crucial for the development of the anterior segment of the eye. The protein is Forkhead box protein E3 (FOXE3) of Homo sapiens (Human).